A 545-amino-acid polypeptide reads, in one-letter code: CTP synthase (545 aa).

Positions 1-266 are amidoligase domain; sequence MATNYIFVTG…DDFVCERFRL (266 aa). Ser-14 contributes to the CTP binding site. Ser-14 is a UTP binding site. ATP is bound by residues 15–20 and Asp-72; that span reads SLGKGI. Mg(2+) contacts are provided by Asp-72 and Glu-140. CTP contacts are provided by residues 147–149, 187–192, and Lys-223; these read DIE and KTKPTQ. Residues 187–192 and Lys-223 contribute to the UTP site; that span reads KTKPTQ. ATP is bound at residue 239–241; the sequence is KDV. In terms of domain architecture, Glutamine amidotransferase type-1 spans 291 to 542; sequence TIGMVGKYTE…VKAAYENHKK (252 aa). Gly-352 lines the L-glutamine pocket. Residue Cys-379 is the Nucleophile; for glutamine hydrolysis of the active site. L-glutamine-binding positions include 380–383, Glu-403, and Arg-470; that span reads LGMQ. Active-site residues include His-515 and Glu-517.

It belongs to the CTP synthase family. As to quaternary structure, homotetramer.

The catalysed reaction is UTP + L-glutamine + ATP + H2O = CTP + L-glutamate + ADP + phosphate + 2 H(+). It carries out the reaction L-glutamine + H2O = L-glutamate + NH4(+). It catalyses the reaction UTP + NH4(+) + ATP = CTP + ADP + phosphate + 2 H(+). It functions in the pathway pyrimidine metabolism; CTP biosynthesis via de novo pathway; CTP from UDP: step 2/2. Allosterically activated by GTP, when glutamine is the substrate; GTP has no effect on the reaction when ammonia is the substrate. The allosteric effector GTP functions by stabilizing the protein conformation that binds the tetrahedral intermediate(s) formed during glutamine hydrolysis. Inhibited by the product CTP, via allosteric rather than competitive inhibition. In terms of biological role, catalyzes the ATP-dependent amination of UTP to CTP with either L-glutamine or ammonia as the source of nitrogen. Regulates intracellular CTP levels through interactions with the four ribonucleotide triphosphates. This is CTP synthase from Haemophilus influenzae (strain PittEE).